The following is a 56-amino-acid chain: Aspartyl-phosphate phosphatase YisI (56 aa).

It belongs to the spo0E family.

In terms of biological role, aspartyl-phosphate phosphatase which specifically dephosphorylates the sporulation transcription factor Spo0A-P and negatively regulates the sporulation initiation pathway in order to control the proper timing of sporulation. The chain is Aspartyl-phosphate phosphatase YisI (yisI) from Bacillus subtilis (strain 168).